A 173-amino-acid polypeptide reads, in one-letter code: Glutamyl-tRNA(Gln) amidotransferase subunit C, mitochondrial (173 aa).

The protein belongs to the GatC family. As to quaternary structure, subunit of the heterotrimeric GatCAB amidotransferase (AdT) complex, composed of A, B and C subunits.

It is found in the mitochondrion. The catalysed reaction is L-glutamyl-tRNA(Gln) + L-glutamine + ATP + H2O = L-glutaminyl-tRNA(Gln) + L-glutamate + ADP + phosphate + H(+). Its function is as follows. Allows the formation of correctly charged Gln-tRNA(Gln) through the transamidation of misacylated Glu-tRNA(Gln) in the mitochondria. The reaction takes place in the presence of glutamine and ATP through an activated gamma-phospho-Glu-tRNA(Gln). The protein is Glutamyl-tRNA(Gln) amidotransferase subunit C, mitochondrial of Drosophila persimilis (Fruit fly).